A 256-amino-acid chain; its full sequence is Biosynthetic peptidoglycan transglycosylase (256 aa).

Residues 26–48 (VARWLAYAGGVFAGAWLATQLYY) traverse the membrane as a helical segment.

The protein belongs to the glycosyltransferase 51 family.

It is found in the cell inner membrane. It catalyses the reaction [GlcNAc-(1-&gt;4)-Mur2Ac(oyl-L-Ala-gamma-D-Glu-L-Lys-D-Ala-D-Ala)](n)-di-trans,octa-cis-undecaprenyl diphosphate + beta-D-GlcNAc-(1-&gt;4)-Mur2Ac(oyl-L-Ala-gamma-D-Glu-L-Lys-D-Ala-D-Ala)-di-trans,octa-cis-undecaprenyl diphosphate = [GlcNAc-(1-&gt;4)-Mur2Ac(oyl-L-Ala-gamma-D-Glu-L-Lys-D-Ala-D-Ala)](n+1)-di-trans,octa-cis-undecaprenyl diphosphate + di-trans,octa-cis-undecaprenyl diphosphate + H(+). Its pathway is cell wall biogenesis; peptidoglycan biosynthesis. Functionally, peptidoglycan polymerase that catalyzes glycan chain elongation from lipid-linked precursors. This chain is Biosynthetic peptidoglycan transglycosylase, found in Burkholderia thailandensis (strain ATCC 700388 / DSM 13276 / CCUG 48851 / CIP 106301 / E264).